Reading from the N-terminus, the 191-residue chain is dTTP/UTP pyrophosphatase (191 aa).

Asp-65 serves as the catalytic Proton acceptor.

The protein belongs to the Maf family. YhdE subfamily. A divalent metal cation serves as cofactor.

The protein localises to the cytoplasm. It carries out the reaction dTTP + H2O = dTMP + diphosphate + H(+). The enzyme catalyses UTP + H2O = UMP + diphosphate + H(+). In terms of biological role, nucleoside triphosphate pyrophosphatase that hydrolyzes dTTP and UTP. May have a dual role in cell division arrest and in preventing the incorporation of modified nucleotides into cellular nucleic acids. This Leptospira biflexa serovar Patoc (strain Patoc 1 / Ames) protein is dTTP/UTP pyrophosphatase.